The primary structure comprises 287 residues: MNQSVSAAPVVSAGSVTFGQDRPLSIIAGPCQMESRAHALEVAGALKEIAARLNIGLVFKTSFDKANRTSASGARGLGLKQALPVFAEIGSSLGLPVLTDVHEAAQCTEVAQAVDVLQIPAFLCRQTDLLLAAAATGKVVNVKKGQFLAPWDMANVVAKITGGGNPNVLVTERGASFGYNTLVSDMRSLPILARTTGAPVIFDATHSVQQPGGNGTSSGGEREFVPVLARAAVAVGVAGVFIETHPDPDHAPSDGPNMVPLREFEALVRRLMAFDALAKAADPALPK.

Belongs to the KdsA family.

Its subcellular location is the cytoplasm. It carries out the reaction D-arabinose 5-phosphate + phosphoenolpyruvate + H2O = 3-deoxy-alpha-D-manno-2-octulosonate-8-phosphate + phosphate. It functions in the pathway carbohydrate biosynthesis; 3-deoxy-D-manno-octulosonate biosynthesis; 3-deoxy-D-manno-octulosonate from D-ribulose 5-phosphate: step 2/3. The protein operates within bacterial outer membrane biogenesis; lipopolysaccharide biosynthesis. The protein is 2-dehydro-3-deoxyphosphooctonate aldolase of Nitrobacter hamburgensis (strain DSM 10229 / NCIMB 13809 / X14).